Here is a 227-residue protein sequence, read N- to C-terminus: LysM and putative peptidoglycan-binding domain-containing protein 1 (227 aa).

Over residues 1–11 the composition is skewed to pro residues; it reads MASPSRQPPPG. Residues 1-20 are disordered; the sequence is MASPSRQPPPGGSGLLHGSR. A phosphoserine mark is found at serine 23 and serine 33. The region spanning 40–84 is the LysM domain; it reads LEHQLEPGDTLAGLALKYGVTMEQIKRANRLYTNDSIFLKKTLYI. Positions 95–150 are disordered; it reads NGLDSEEEKDGEEEVRPSNDEVWPHSTERKKQETGAGRANGEVFPTPGQETPTPIH. Positions 98–107 are enriched in acidic residues; sequence DSEEEKDGEE. The residue at position 99 (serine 99) is a Phosphoserine. Positions 108–127 are enriched in basic and acidic residues; it reads EVRPSNDEVWPHSTERKKQE. Phosphoserine is present on residues serine 166, serine 181, serine 194, and serine 212. Residues 172–196 form a disordered region; it reads AAQKLKKGESGVPGEDAGLHLSSPR.

This chain is LysM and putative peptidoglycan-binding domain-containing protein 1 (LYSMD1), found in Macaca fascicularis (Crab-eating macaque).